A 222-amino-acid polypeptide reads, in one-letter code: Thiamine-phosphate synthase (222 aa).

4-amino-2-methyl-5-(diphosphooxymethyl)pyrimidine-binding positions include 42 to 46 and Asn74; that span reads QYRDK. 2 residues coordinate Mg(2+): Asp75 and Asp94. Thr113 contacts 4-amino-2-methyl-5-(diphosphooxymethyl)pyrimidine. 140-142 serves as a coordination point for 2-[(2R,5Z)-2-carboxy-4-methylthiazol-5(2H)-ylidene]ethyl phosphate; it reads SAT. Lys143 serves as a coordination point for 4-amino-2-methyl-5-(diphosphooxymethyl)pyrimidine. 2-[(2R,5Z)-2-carboxy-4-methylthiazol-5(2H)-ylidene]ethyl phosphate is bound at residue Gly169.

This sequence belongs to the thiamine-phosphate synthase family. Requires Mg(2+) as cofactor.

It catalyses the reaction 2-[(2R,5Z)-2-carboxy-4-methylthiazol-5(2H)-ylidene]ethyl phosphate + 4-amino-2-methyl-5-(diphosphooxymethyl)pyrimidine + 2 H(+) = thiamine phosphate + CO2 + diphosphate. It carries out the reaction 2-(2-carboxy-4-methylthiazol-5-yl)ethyl phosphate + 4-amino-2-methyl-5-(diphosphooxymethyl)pyrimidine + 2 H(+) = thiamine phosphate + CO2 + diphosphate. The enzyme catalyses 4-methyl-5-(2-phosphooxyethyl)-thiazole + 4-amino-2-methyl-5-(diphosphooxymethyl)pyrimidine + H(+) = thiamine phosphate + diphosphate. It functions in the pathway cofactor biosynthesis; thiamine diphosphate biosynthesis; thiamine phosphate from 4-amino-2-methyl-5-diphosphomethylpyrimidine and 4-methyl-5-(2-phosphoethyl)-thiazole: step 1/1. Functionally, condenses 4-methyl-5-(beta-hydroxyethyl)thiazole monophosphate (THZ-P) and 2-methyl-4-amino-5-hydroxymethyl pyrimidine pyrophosphate (HMP-PP) to form thiamine monophosphate (TMP). This is Thiamine-phosphate synthase from Marinobacter nauticus (strain ATCC 700491 / DSM 11845 / VT8) (Marinobacter aquaeolei).